Consider the following 481-residue polypeptide: Aspartyl/glutamyl-tRNA(Asn/Gln) amidotransferase subunit B (481 aa).

This sequence belongs to the GatB/GatE family. GatB subfamily. Heterotrimer of A, B and C subunits.

It carries out the reaction L-glutamyl-tRNA(Gln) + L-glutamine + ATP + H2O = L-glutaminyl-tRNA(Gln) + L-glutamate + ADP + phosphate + H(+). The catalysed reaction is L-aspartyl-tRNA(Asn) + L-glutamine + ATP + H2O = L-asparaginyl-tRNA(Asn) + L-glutamate + ADP + phosphate + 2 H(+). Its function is as follows. Allows the formation of correctly charged Asn-tRNA(Asn) or Gln-tRNA(Gln) through the transamidation of misacylated Asp-tRNA(Asn) or Glu-tRNA(Gln) in organisms which lack either or both of asparaginyl-tRNA or glutaminyl-tRNA synthetases. The reaction takes place in the presence of glutamine and ATP through an activated phospho-Asp-tRNA(Asn) or phospho-Glu-tRNA(Gln). The chain is Aspartyl/glutamyl-tRNA(Asn/Gln) amidotransferase subunit B from Ehrlichia ruminantium (strain Gardel).